The sequence spans 405 residues: L-carnitine CoA-transferase (405 aa).

Lys97 and Arg104 together coordinate CoA. Asp169 acts as the Nucleophile in catalysis.

Belongs to the CoA-transferase III family. CaiB subfamily. As to quaternary structure, homodimer.

It is found in the cytoplasm. The catalysed reaction is crotonobetainyl-CoA + (R)-carnitine = crotonobetaine + (R)-carnitinyl-CoA. The enzyme catalyses 4-(trimethylamino)butanoyl-CoA + (R)-carnitine = (R)-carnitinyl-CoA + 4-(trimethylamino)butanoate. Its pathway is amine and polyamine metabolism; carnitine metabolism. Functionally, catalyzes the reversible transfer of the CoA moiety from gamma-butyrobetainyl-CoA to L-carnitine to generate L-carnitinyl-CoA and gamma-butyrobetaine. Is also able to catalyze the reversible transfer of the CoA moiety from gamma-butyrobetainyl-CoA or L-carnitinyl-CoA to crotonobetaine to generate crotonobetainyl-CoA. The sequence is that of L-carnitine CoA-transferase from Escherichia coli O17:K52:H18 (strain UMN026 / ExPEC).